A 585-amino-acid chain; its full sequence is Pyruvate kinase (585 aa).

Arg32 provides a ligand contact to substrate. Residues Asn34, Ser36, Asp66, and Thr67 each contribute to the K(+) site. ATP is bound at residue 34 to 37; it reads NFSH. 2 residues coordinate ATP: Arg73 and Lys156. A Mg(2+)-binding site is contributed by Glu222. Residues Gly245, Asp246, and Thr278 each coordinate substrate. Asp246 provides a ligand contact to Mg(2+).

The protein belongs to the pyruvate kinase family. In the C-terminal section; belongs to the PEP-utilizing enzyme family. In terms of assembly, homotetramer. Requires Mg(2+) as cofactor. It depends on K(+) as a cofactor.

The enzyme catalyses pyruvate + ATP = phosphoenolpyruvate + ADP + H(+). It participates in carbohydrate degradation; glycolysis; pyruvate from D-glyceraldehyde 3-phosphate: step 5/5. This Bacillus licheniformis protein is Pyruvate kinase (pyk).